A 239-amino-acid chain; its full sequence is Sugar fermentation stimulation protein homolog (239 aa).

Belongs to the SfsA family.

This chain is Sugar fermentation stimulation protein homolog, found in Synechococcus sp. (strain JA-3-3Ab) (Cyanobacteria bacterium Yellowstone A-Prime).